The following is a 386-amino-acid chain: Arginine biosynthesis bifunctional protein ArgJ (386 aa).

6 residues coordinate substrate: Thr-148, Lys-170, Thr-181, Glu-261, Asn-381, and Ser-386. Thr-181 (nucleophile) is an active-site residue.

Belongs to the ArgJ family. As to quaternary structure, heterotetramer of two alpha and two beta chains.

The protein localises to the cytoplasm. It catalyses the reaction N(2)-acetyl-L-ornithine + L-glutamate = N-acetyl-L-glutamate + L-ornithine. The catalysed reaction is L-glutamate + acetyl-CoA = N-acetyl-L-glutamate + CoA + H(+). It participates in amino-acid biosynthesis; L-arginine biosynthesis; L-ornithine and N-acetyl-L-glutamate from L-glutamate and N(2)-acetyl-L-ornithine (cyclic): step 1/1. Its pathway is amino-acid biosynthesis; L-arginine biosynthesis; N(2)-acetyl-L-ornithine from L-glutamate: step 1/4. In terms of biological role, catalyzes two activities which are involved in the cyclic version of arginine biosynthesis: the synthesis of N-acetylglutamate from glutamate and acetyl-CoA as the acetyl donor, and of ornithine by transacetylation between N(2)-acetylornithine and glutamate. This chain is Arginine biosynthesis bifunctional protein ArgJ, found in Corynebacterium diphtheriae (strain ATCC 700971 / NCTC 13129 / Biotype gravis).